Reading from the N-terminus, the 106-residue chain is Large ribosomal subunit protein uL24 (106 aa).

The protein belongs to the universal ribosomal protein uL24 family. Part of the 50S ribosomal subunit.

In terms of biological role, one of two assembly initiator proteins, it binds directly to the 5'-end of the 23S rRNA, where it nucleates assembly of the 50S subunit. One of the proteins that surrounds the polypeptide exit tunnel on the outside of the subunit. This chain is Large ribosomal subunit protein uL24, found in Dechloromonas aromatica (strain RCB).